Reading from the N-terminus, the 118-residue chain is Putative pterin-4-alpha-carbinolamine dehydratase (118 aa).

This sequence belongs to the pterin-4-alpha-carbinolamine dehydratase family.

The catalysed reaction is (4aS,6R)-4a-hydroxy-L-erythro-5,6,7,8-tetrahydrobiopterin = (6R)-L-erythro-6,7-dihydrobiopterin + H2O. The polypeptide is Putative pterin-4-alpha-carbinolamine dehydratase (Xanthomonas euvesicatoria pv. vesicatoria (strain 85-10) (Xanthomonas campestris pv. vesicatoria)).